The chain runs to 560 residues: Membrane protein insertase YidC (560 aa).

A helical transmembrane segment spans residues 7–27 (ILIVALAIVSYVMVLKWNQDY). A disordered region spans residues 43–72 (APAIPDTPLGNNASASADVPSANGETSAPL). The next 4 membrane-spanning stretches (helical) occupy residues 367-387 (IVGN…GIFF), 437-457 (LGGC…YWVL), 468-488 (FMLW…PIIM), and 515-535 (PIIF…YWVV).

This sequence belongs to the OXA1/ALB3/YidC family. Type 1 subfamily. Interacts with the Sec translocase complex via SecD. Specifically interacts with transmembrane segments of nascent integral membrane proteins during membrane integration.

The protein resides in the cell inner membrane. Its function is as follows. Required for the insertion and/or proper folding and/or complex formation of integral membrane proteins into the membrane. Involved in integration of membrane proteins that insert both dependently and independently of the Sec translocase complex, as well as at least some lipoproteins. Aids folding of multispanning membrane proteins. In Pseudomonas fluorescens (strain SBW25), this protein is Membrane protein insertase YidC.